The following is a 461-amino-acid chain: Anthocyanidin 3-O-glucoside 5-O-glucosyltransferase (461 aa).

An N-terminal signal peptide occupies residues 1 to 15 (MSRAHVLLATFPAQG). The active-site Proton acceptor is the H16. H16 provides a ligand contact to an anthocyanidin. The UDP-alpha-D-glucose site is built by Q338, H353, W356, N357, S358, E361, D377, and Q378.

Belongs to the UDP-glycosyltransferase family.

It catalyses the reaction an anthocyanidin 3-O-beta-D-glucoside + UDP-alpha-D-glucose = an anthocyanidin 3,5-di-O-beta-D-glucoside + UDP + 2 H(+). It functions in the pathway pigment biosynthesis; anthocyanin biosynthesis. In terms of biological role, catalyzes the glucosylation at the O-5 position of anthocyanidin 3-glucosides to form anthocyanidin 3,5-di-O-glucosides using UDP-glucose as sugar donor. Anthocyanidin 3,5-di-O-glucosides are molecules that are responsible for pigmentation. Also acts on anthocyanidin 3-O-(6-O-malonylglucoside). Much less active with hydroxycinnamoylglucose derivatives. No activity in the absence of the 3-O-glucoside group. The chain is Anthocyanidin 3-O-glucoside 5-O-glucosyltransferase (HGT8) from Verbena hybrida (Garden vervain).